The following is a 148-amino-acid chain: Probable histone H2B.1 (148 aa).

Over residues 1 to 32 (MAPKGEKKPAEKKPAEEKKSTVAEKAPAEKKP) the composition is skewed to basic and acidic residues. The segment at 1 to 57 (MAPKGEKKPAEKKPAEEKKSTVAEKAPAEKKPKAGKKLPKEGGSAAGEKKKKRSKKS) is disordered. An N6-acetyllysine mark is found at K7, K36, and K37. Residue K144 forms a Glycyl lysine isopeptide (Lys-Gly) (interchain with G-Cter in ubiquitin) linkage.

It belongs to the histone H2B family. The nucleosome is a histone octamer containing two molecules each of H2A, H2B, H3 and H4 assembled in one H3-H4 heterotetramer and two H2A-H2B heterodimers. The octamer wraps approximately 147 bp of DNA. In terms of processing, can be acetylated to form H2BK6ac, H2BK33ac and H2BK34ac. Monoubiquitinated to form H2BK143ub1; may give a specific tag for epigenetic transcriptional activation.

The protein resides in the nucleus. It localises to the chromosome. Functionally, core component of nucleosome. Nucleosomes wrap and compact DNA into chromatin, limiting DNA accessibility to the cellular machineries which require DNA as a template. Histones thereby play a central role in transcription regulation, DNA repair, DNA replication and chromosomal stability. DNA accessibility is regulated via a complex set of post-translational modifications of histones, also called histone code, and nucleosome remodeling. This is Probable histone H2B.1 from Medicago truncatula (Barrel medic).